Here is a 99-residue protein sequence, read N- to C-terminus: A-type ATP synthase subunit F (99 aa).

The protein belongs to the V-ATPase F subunit family. In terms of assembly, has multiple subunits with at least A(3), B(3), C, D, E, F, H, I and proteolipid K(x).

The protein resides in the cell membrane. Component of the A-type ATP synthase that produces ATP from ADP in the presence of a proton gradient across the membrane. The polypeptide is A-type ATP synthase subunit F (Methanococcus maripaludis (strain DSM 14266 / JCM 13030 / NBRC 101832 / S2 / LL)).